The primary structure comprises 267 residues: Large ribosomal subunit protein bL9m (267 aa).

The transit peptide at 1-52 directs the protein to the mitochondrion; it reads MAAPVVTAPGRALLRAGAGRLLRGGVQELLRPRHEGNAPDLACNFSLSQNRG.

This sequence belongs to the bacterial ribosomal protein bL9 family. In terms of assembly, component of the mitochondrial large ribosomal subunit (mt-LSU). Mature mammalian 55S mitochondrial ribosomes consist of a small (28S) and a large (39S) subunit. The 28S small subunit contains a 12S ribosomal RNA (12S mt-rRNA) and 30 different proteins. The 39S large subunit contains a 16S rRNA (16S mt-rRNA), a copy of mitochondrial valine transfer RNA (mt-tRNA(Val)), which plays an integral structural role, and 52 different proteins.

Its subcellular location is the mitochondrion. In Homo sapiens (Human), this protein is Large ribosomal subunit protein bL9m (MRPL9).